Reading from the N-terminus, the 516-residue chain is Pickpocket protein 11 (516 aa).

Transmembrane regions (helical) follow at residues 117-137 (ILWWLLICNAVLLSFTLVIMS) and 454-474 (FIGTFGGITGLFMGCSFVSVF).

It belongs to the amiloride-sensitive sodium channel (TC 1.A.6) family. In terms of tissue distribution, expressed in embryonic and larval tracheal systems in the dorsal trunk and transverse connective (TC), but not in the junction between the dorsal trunk and TC, and in several tracheal branches and terminal cells. In larvae, also expressed in ventral pits. Expressed in the taste-sensing terminal organ of the larval head. In adult, expressed in hairs on the tibia, femur, tarsi of the leg and wing margin.

It is found in the membrane. Part of a complex that plays a role in tracheal liquid clearance. In both larvae and adults, contributes to the behavioral response to salt. Probable role in sodium transport. The polypeptide is Pickpocket protein 11 (ppk11) (Drosophila melanogaster (Fruit fly)).